The chain runs to 714 residues: MPMPPQCASSKPPSPPPPPHPHEHEVGDDMAEEAPPPPPPPKLLYIAVSDAAARRAFRYTRPVLQGTLQLMGCKARHAFKISKRVFNVMRSEFLDASKSDTADNEENAPSLVKDVEMLKPKILEATLSSIPFELYKTQTTIVVSREKFLSVVCDALSSYKYVGPNQKADFLLACRIKERKESVTVLLCGTSGCGKSTLSSLLGSRLGITTVVSTDSIRHMMRGFTDEKQNPLLYASTYHAGECLDPVAVAQAKAKRKAQKLDIVSHPNTNEGRDDTSDDKAHHGSSELPPRTELIGSKQMAIEGFKAQSEMVIDSLDRLITSWEEQKQSVIVEGVHLSLNFVMGLMKKHPSIIPFMVYIANEEKHMERFAVRAKYMTLDPAKNRYIKYIRNIRAIQDYLCNRADKHLVPKINNTNVDQSVAAIHATVFSCLRRREAGEQLYDLNTNTVAVVNEEYRNQRAANSLGSKGMFQLIQRQGSSRNLMAILNTDGSVTKAWHVDKNNGNGSLDGTSSDKSTKNPMYDTFGKAEPVNLQFGSFGISAWMSDTGGTSHTGSVDDLRADGIETGGRYYSSCCSSPKVSDCPSKELMEDDYSVFGSEEDADDPPDAGTDEDLTDEERDMHEIEAGSVDEHSTKSDEEYDDLAMQDVMENGYWSDDEQAASSTKNSSNQEKNIHGAADGDVVDDEGSGNDRFHHNLAFFLKMSKKVAATELPCA.

Positions 1-11 (MPMPPQCASSK) are enriched in low complexity. Disordered stretches follow at residues 1–42 (MPMP…PPPK), 259–293 (QKLD…PRTE), and 595–689 (FGSE…GSGN). Positions 271 to 285 (EGRDDTSDDKAHHGS) are enriched in basic and acidic residues. Over residues 595 to 617 (FGSEEDADDPPDAGTDEDLTDEE) the composition is skewed to acidic residues. The segment covering 618–636 (RDMHEIEAGSVDEHSTKSD) has biased composition (basic and acidic residues). Polar residues predominate over residues 659–670 (AASSTKNSSNQE).

In terms of tissue distribution, expressed in roots, leaf blade shoots, leaf sheath shoots and panicles.

Its function is as follows. Required for the accumulation of phytic acid in seeds. Phytic acid is the primary storage form of phosphorus in cereal grains and other plant seeds. This is P-loop NTPase domain-containing protein LPA1 from Oryza sativa subsp. japonica (Rice).